The chain runs to 144 residues: MKGGKSKAKSDNKLAVKKQAADTKKTKKAVKDPNKPKRPPSAFFVFMEDFRKTYKEKHPNNKSVAVVGKAGGDKWKQLTAAEKAPFISKAEKRKQEYEKNLQAYNKKQAAGAAEEEESDKSRSEVNDDDEDQDGSGEDDSEDDD.

Disordered stretches follow at residues 1 to 42 (MKGG…PPSA) and 85 to 144 (PFIS…EDDD). Composition is skewed to basic and acidic residues over residues 8 to 35 (AKSDNKLAVKKQAADTKKTKKAVKDPNK) and 89 to 99 (KAEKRKQEYEK). The segment at residues 36-105 (PKRPPSAFFV…EYEKNLQAYN (70 aa)) is a DNA-binding region (HMG box). A compositionally biased stretch (acidic residues) spans 126-144 (NDDDEDQDGSGEDDSEDDD).

This sequence belongs to the HMGB family. As to expression, expressed at higher levels in dark-grown tissues, such as roots; and at lower levels in light-grown tissues, such as cotyledons and stems.

The protein localises to the nucleus. This is HMG1/2-like protein from Ipomoea nil (Japanese morning glory).